The primary structure comprises 60 residues: Large ribosomal subunit protein uL30 (60 aa).

It belongs to the universal ribosomal protein uL30 family. In terms of assembly, part of the 50S ribosomal subunit.

This Dechloromonas aromatica (strain RCB) protein is Large ribosomal subunit protein uL30.